The chain runs to 158 residues: MADEALFLLLHNEMVSGVYKSAEQGEVENGRCITKLENMGFRVGQGLIERFTKDTARFKDELDIMKFICKDFWTTVFKKQIDNLRTNHQGIYVLQDNKFRLLTQMSAGKQYLEHASKYLAFTCGLIRGGLSNLGIKSIVTAEVSSMPACKFQVMIQKL.

The protein belongs to the TRAPP small subunits family. BET3 subfamily. As to quaternary structure, homodimer. Part of a TRAPP complex. Heterodimer with TRAPPC3. The heterodimer TRAPPC6B-TRAPPC3 interacts with TRAPPC1 likely providing a core for TRAPP complex formation.

The protein localises to the golgi apparatus. Its subcellular location is the cis-Golgi network. It is found in the endoplasmic reticulum. Its function is as follows. Component of a transport protein particle (TRAPP) complex that may function in specific stages of inter-organelle traffic. Specifically involved in the early development of neural circuitry, likely by controlling the frequency and amplitude of intracellular calcium transients implicated in the regulation of neuron differentiation and survival. This is Trafficking protein particle complex subunit 6B from Bos taurus (Bovine).